The sequence spans 104 residues: Iron-sulfur cluster assembly protein CyaY (104 aa).

It belongs to the frataxin family.

In terms of biological role, involved in iron-sulfur (Fe-S) cluster assembly. May act as a regulator of Fe-S biogenesis. The chain is Iron-sulfur cluster assembly protein CyaY from Aliivibrio fischeri (strain MJ11) (Vibrio fischeri).